The sequence spans 238 residues: Glycerol-3-phosphate acyltransferase (238 aa).

A run of 6 helical transmembrane segments spans residues 5 to 25 (VIFG…SINF), 61 to 81 (FLVF…SAIL), 88 to 108 (FGAV…VFPI), 125 to 145 (IASL…AMIF), 149 to 169 (IVSL…IIPW), and 194 to 214 (AWYL…FTHI).

This sequence belongs to the PlsY family. As to quaternary structure, probably interacts with PlsX.

It is found in the cell membrane. It catalyses the reaction an acyl phosphate + sn-glycerol 3-phosphate = a 1-acyl-sn-glycero-3-phosphate + phosphate. It functions in the pathway lipid metabolism; phospholipid metabolism. Catalyzes the transfer of an acyl group from acyl-phosphate (acyl-PO(4)) to glycerol-3-phosphate (G3P) to form lysophosphatidic acid (LPA). This enzyme utilizes acyl-phosphate as fatty acyl donor, but not acyl-CoA or acyl-ACP. In Mycoplasma mobile (strain ATCC 43663 / 163K / NCTC 11711) (Mesomycoplasma mobile), this protein is Glycerol-3-phosphate acyltransferase.